A 183-amino-acid polypeptide reads, in one-letter code: ATP-dependent protease subunit HslV (183 aa).

Thr-2 is an active-site residue. Residues Gly-157, Cys-160, and Thr-163 each coordinate Na(+).

This sequence belongs to the peptidase T1B family. HslV subfamily. A double ring-shaped homohexamer of HslV is capped on each side by a ring-shaped HslU homohexamer. The assembly of the HslU/HslV complex is dependent on binding of ATP.

The protein resides in the cytoplasm. It carries out the reaction ATP-dependent cleavage of peptide bonds with broad specificity.. Its activity is regulated as follows. Allosterically activated by HslU binding. Its function is as follows. Protease subunit of a proteasome-like degradation complex believed to be a general protein degrading machinery. This chain is ATP-dependent protease subunit HslV, found in Vibrio campbellii (strain ATCC BAA-1116).